Consider the following 400-residue polypeptide: Melanization protease 1 (400 aa).

The signal sequence occupies residues 1-22 (MEPHFFFTVLWMLLMGTSSTYA). The propeptide at 23-137 (QEIFGYCRTP…PNCGENFGDR (115 aa)) is activation peptide. Residues 28–91 (YCRTPDENSG…FCFTNVQICC (64 aa)) form the Clip domain. Disulfide bonds link Cys-29–Cys-90, Cys-39–Cys-70, and Cys-45–Cys-91. Residues 98–120 (NQQPQWGNHPQPTQTTKPTKRSG) form a disordered region. Disulfide bonds link Cys-130–Cys-268, Cys-168–Cys-184, and Cys-210–Cys-220. Residues 138-399 (VVGGNETTKR…YLNWIENNVR (262 aa)) enclose the Peptidase S1 domain. Asn-142 is a glycosylation site (N-linked (GlcNAc...) asparagine). Catalysis depends on His-183, which acts as the Charge relay system. Ca(2+) is bound by residues Glu-201, Asp-203, Thr-206, and Asp-209. Asp-248 serves as the catalytic Charge relay system. Residue Asn-296 is glycosylated (N-linked (GlcNAc...) asparagine). Cystine bridges form between Cys-315/Cys-332 and Cys-342/Cys-375. Catalysis depends on Ser-346, which acts as the Charge relay system.

This sequence belongs to the peptidase S1 family. CLIP subfamily.

In terms of biological role, serine protease which plays an essential role in the melanization immune response by acting downstream of sp7 to activate prophenoloxidase (PPO1). May function in diverse Hayan-dependent PPO1-activating cascades that are negatively controlled by different serpin proteins; Spn27A in the hemolymph and Spn77BA in the trachea. Regulation of melanization and PPO1 activation appears to be largely independent of the Toll signaling pathway. The polypeptide is Melanization protease 1 (Drosophila melanogaster (Fruit fly)).